We begin with the raw amino-acid sequence, 695 residues long: NAD(P)H-quinone oxidoreductase subunit 5, chloroplastic (695 aa).

A run of 15 helical transmembrane segments spans residues 1 to 21, 32 to 52, 81 to 101, 117 to 137, 139 to 159, 177 to 197, 211 to 231, 250 to 270, 278 to 298, 319 to 339, 346 to 366, 388 to 408, 417 to 437, 535 to 555, and 594 to 614; these read WIIPFIPLPVPILIGAGLILF, WAFQSVLLLSIVMIFSIYLSI, IDPLTSIMXXLITTVGIMVLI, FAYMSFFSTSMLGLVTSSNLI, IYIFWELVGLCSYLLIGFWFT, GDFGLLLGILGFYWITGSFEF, NEVNFLFVTLCAVLLFVGAVA, TPISALIHAATMVAAGIFLVA, VIPYIMYLISIIGIITVLLGA, LGYMMLALGMGSYRSALFHLI, ALLFLGSGSIIHSMETIVGYS, ITFLLGTLSLCGIPPLACFWS, WLYSPIFAIIAWATAGLTAFY, LFPIFVLGLFTLFVGSIGIPF, and VLSVSIAYFGIFIASFLYKPI.

It belongs to the complex I subunit 5 family. As to quaternary structure, NDH is composed of at least 16 different subunits, 5 of which are encoded in the nucleus.

The protein resides in the plastid. Its subcellular location is the chloroplast thylakoid membrane. It carries out the reaction a plastoquinone + NADH + (n+1) H(+)(in) = a plastoquinol + NAD(+) + n H(+)(out). It catalyses the reaction a plastoquinone + NADPH + (n+1) H(+)(in) = a plastoquinol + NADP(+) + n H(+)(out). In terms of biological role, NDH shuttles electrons from NAD(P)H:plastoquinone, via FMN and iron-sulfur (Fe-S) centers, to quinones in the photosynthetic chain and possibly in a chloroplast respiratory chain. The immediate electron acceptor for the enzyme in this species is believed to be plastoquinone. Couples the redox reaction to proton translocation, and thus conserves the redox energy in a proton gradient. The protein is NAD(P)H-quinone oxidoreductase subunit 5, chloroplastic (ndhF) of Capsicum baccatum (Peruvian pepper).